The primary structure comprises 471 residues: Sulfate adenylyltransferase subunit 1 (471 aa).

A tr-type G domain is found at 22-239 (KDMLRFLTCG…NIEIGEDDNL (218 aa)). The interval 31–38 (GSVDDGKS) is G1. 31–38 (GSVDDGKS) contacts GTP. The interval 89 to 93 (GITID) is G2. The tract at residues 110–113 (DTPG) is G3. Residues 110–114 (DTPGH) and 165–168 (NKMD) each bind GTP. The interval 165–168 (NKMD) is G4. The segment at 202–204 (SAL) is G5.

The protein belongs to the TRAFAC class translation factor GTPase superfamily. Classic translation factor GTPase family. CysN/NodQ subfamily. As to quaternary structure, heterodimer composed of CysD, the smaller subunit, and CysN.

It catalyses the reaction sulfate + ATP + H(+) = adenosine 5'-phosphosulfate + diphosphate. It participates in sulfur metabolism; hydrogen sulfide biosynthesis; sulfite from sulfate: step 1/3. Functionally, with CysD forms the ATP sulfurylase (ATPS) that catalyzes the adenylation of sulfate producing adenosine 5'-phosphosulfate (APS) and diphosphate, the first enzymatic step in sulfur assimilation pathway. APS synthesis involves the formation of a high-energy phosphoric-sulfuric acid anhydride bond driven by GTP hydrolysis by CysN coupled to ATP hydrolysis by CysD. The protein is Sulfate adenylyltransferase subunit 1 of Alteromonas mediterranea (strain DSM 17117 / CIP 110805 / LMG 28347 / Deep ecotype).